We begin with the raw amino-acid sequence, 718 residues long: GMP synthase [glutamine-hydrolyzing] (718 aa).

Positions 43 to 247 constitute a Glutamine amidotransferase type-1 domain; sequence VIVILDAGSQ…LIDICGCSAN (205 aa). Active-site for GATase activity residues include C128, H221, and E223. A GMPS ATP-PPase domain is found at 248–457; it reads YTLDDREQQA…LGLSDSLVWR (210 aa). 275–281 is a binding site for ATP; the sequence is SGGVDST.

In terms of assembly, homodimer.

The catalysed reaction is XMP + L-glutamine + ATP + H2O = GMP + L-glutamate + AMP + diphosphate + 2 H(+). It participates in purine metabolism; GMP biosynthesis; GMP from XMP (L-Gln route): step 1/1. The sequence is that of GMP synthase [glutamine-hydrolyzing] (guaA) from Dictyostelium discoideum (Social amoeba).